A 122-amino-acid chain; its full sequence is Histone H2B.1 (122 aa).

Over residues 1-10 (MAPKKAPAAA) the composition is skewed to low complexity. The tract at residues 1–28 (MAPKKAPAAAAEKKVKKAPTTEKKNKKK) is disordered. Alanine 2 is modified (n,N,N-trimethylalanine). N6-acetyllysine is present on residues lysine 5 and lysine 42. Residue lysine 116 forms a Glycyl lysine isopeptide (Lys-Gly) (interchain with G-Cter in ubiquitin) linkage.

Belongs to the histone H2B family. As to quaternary structure, the nucleosome is a histone octamer containing two molecules each of H2A, H2B, H3 and H4 assembled in one H3-H4 heterotetramer and two H2A-H2B heterodimers. The octamer wraps approximately 147 bp of DNA. Post-translationally, acetylation occurs almost exclusively in the MAC. In terms of processing, monoubiquitination to form H2BK115ub1 gives a specific tag for epigenetic transcriptional activation and is also prerequisite for H3K4me and H3K79me formation.

It localises to the nucleus. It is found in the chromosome. Functionally, core component of nucleosome. Nucleosomes wrap and compact DNA into chromatin, limiting DNA accessibility to the cellular machineries which require DNA as a template. Histones thereby play a central role in transcription regulation, DNA repair, DNA replication and chromosomal stability. DNA accessibility is regulated via a complex set of post-translational modifications of histones, also called histone code, and nucleosome remodeling. The protein is Histone H2B.1 (HTB1) of Tetrahymena thermophila (strain SB210).